Consider the following 263-residue polypeptide: Tryptophan synthase alpha chain (263 aa).

Residues Glu-49 and Asp-60 each act as proton acceptor in the active site.

Belongs to the TrpA family. As to quaternary structure, tetramer of two alpha and two beta chains.

The enzyme catalyses (1S,2R)-1-C-(indol-3-yl)glycerol 3-phosphate + L-serine = D-glyceraldehyde 3-phosphate + L-tryptophan + H2O. It functions in the pathway amino-acid biosynthesis; L-tryptophan biosynthesis; L-tryptophan from chorismate: step 5/5. Its function is as follows. The alpha subunit is responsible for the aldol cleavage of indoleglycerol phosphate to indole and glyceraldehyde 3-phosphate. This Cereibacter sphaeroides (strain ATCC 17025 / ATH 2.4.3) (Rhodobacter sphaeroides) protein is Tryptophan synthase alpha chain.